A 423-amino-acid polypeptide reads, in one-letter code: tRNA(Ile)-lysidine synthase (423 aa).

Residue 43-48 coordinates ATP; it reads SSGVDS.

It belongs to the tRNA(Ile)-lysidine synthase family.

It is found in the cytoplasm. It catalyses the reaction cytidine(34) in tRNA(Ile2) + L-lysine + ATP = lysidine(34) in tRNA(Ile2) + AMP + diphosphate + H(+). Ligates lysine onto the cytidine present at position 34 of the AUA codon-specific tRNA(Ile) that contains the anticodon CAU, in an ATP-dependent manner. Cytidine is converted to lysidine, thus changing the amino acid specificity of the tRNA from methionine to isoleucine. The sequence is that of tRNA(Ile)-lysidine synthase from Helicobacter hepaticus (strain ATCC 51449 / 3B1).